Reading from the N-terminus, the 926-residue chain is DNA mismatch repair protein MutS (926 aa).

The disordered stretch occupies residues 16-40 (VASTPTRRGRPPGSSAARASNGAGS). Low complexity predominate over residues 26 to 40 (PPGSSAARASNGAGS). 658–665 (GPNMAGKS) serves as a coordination point for ATP.

The protein belongs to the DNA mismatch repair MutS family.

In terms of biological role, this protein is involved in the repair of mismatches in DNA. It is possible that it carries out the mismatch recognition step. This protein has a weak ATPase activity. This Granulibacter bethesdensis (strain ATCC BAA-1260 / CGDNIH1) protein is DNA mismatch repair protein MutS.